Consider the following 410-residue polypeptide: Beta-arrestin-1 (410 aa).

Residues 1–163 (MGDKGTRVFK…LEEKIHKRNS (163 aa)) are interaction with SRC. The interval 45–86 (PEYLKERRVYVTLTCAFRYGREDLDVLGLTFRKDLFVANVQS) is interaction with CHRM2. Tyrosine 47 carries the post-translational modification Phosphotyrosine. Lysine 250, methionine 255, lysine 324, and lysine 326 together coordinate 1D-myo-inositol hexakisphosphate. Residues 318–410 (IVSYKVKVKL…GTGSPQLNNR (93 aa)) form an interaction with TRAF6 region. The short motif at 385–395 (RQRLKGMKDDK) is the [DE]-X(1,2)-F-X-X-[FL]-X-X-X-R motif element. Residues 389–410 (KGMKDDKEEEENGTGSPQLNNR) are disordered. Over residues 401 to 410 (GTGSPQLNNR) the composition is skewed to polar residues. Serine 404 carries the phosphoserine; by GRK5 modification.

The protein belongs to the arrestin family. In terms of assembly, monomer. Homodimer. Homooligomer; the self-association is mediated by InsP6-binding. Heterooligomer with ARRB2; the association is mediated by InsP6-binding. Interacts with ADRB2 (phosphorylated). Interacts with CHRM2 (phosphorylated). Interacts with LHCGR. Interacts with CYTH2 and CASR. Interacts with AP2B1 (dephosphorylated); phosphorylation of AP2B1 disrupts the interaction. Interacts (dephosphorylated at Ser-404) with CLTC. Interacts with CCR2 and GRK2. Interacts with CRR5. Interacts with PTAFR (phosphorylated on serine residues). Interacts with CLTC and MAP2K3. Interacts with CREB1. Interacts with TRAF6. Interacts with IGF1R and MDM2. Interacts with C5AR1. Interacts with PDE4D. Interacts with SRC (via the SH3 domain and the protein kinase domain); the interaction is independent of the phosphorylation state of SRC C-terminus. Interacts with TACR1. Interacts with RAF1. Interacts with CHUK, IKBKB and MAP3K14. Interacts with DVL1; the interaction is enhanced by phosphorylation of DVL1. Interacts with DVL2; the interaction is enhanced by phosphorylation of DVL2. Interacts with IGF1R. Associates with MAP kinase p38. Part of a MAPK signaling complex consisting of TACR1, ARRB1, SRC, MAPK1 (activated) and MAPK3 (activated). Part of a MAPK signaling complex consisting of F2RL1, ARRB1, RAF1, MAPK1 (activated) and MAPK3 (activated). Interacts with GPR143. Interacts with MAP2K4/MKK4. Interacts with HCK and CXCR1 (phosphorylated). Interacts with ACKR3 and ACKR4. Interacts with ARRDC1; the interaction is direct. Interacts with GPR61, GPR62 and GPR135. Post-translationally, constitutively phosphorylated at in the cytoplasm. At the plasma membrane, is rapidly dephosphorylated, a process that is required for clathrin binding and ADRB2 endocytosis but not for ADRB2 binding and desensitization. Once internalized, is rephosphorylated. In terms of processing, the ubiquitination status appears to regulate the formation and trafficking of beta-arrestin-GPCR complexes and signaling. Ubiquitination appears to occur GPCR-specific. Ubiquitinated by MDM2; the ubiquitination is required for rapid internalization of ADRB2. Deubiquitinated by USP33; the deubiquitination leads to a dissociation of the beta-arrestin-GPCR complex. Stimulation of a class A GPCR, such as ADRB2, induces transient ubiquitination and subsequently promotes association with USP33.

Its subcellular location is the cytoplasm. The protein localises to the nucleus. The protein resides in the cell membrane. It localises to the membrane. It is found in the clathrin-coated pit. Its subcellular location is the cell projection. The protein localises to the pseudopodium. The protein resides in the cytoplasmic vesicle. Functions in regulating agonist-mediated G-protein coupled receptor (GPCR) signaling by mediating both receptor desensitization and resensitization processes. During homologous desensitization, beta-arrestins bind to the GPRK-phosphorylated receptor and sterically preclude its coupling to the cognate G-protein; the binding appears to require additional receptor determinants exposed only in the active receptor conformation. The beta-arrestins target many receptors for internalization by acting as endocytic adapters (CLASPs, clathrin-associated sorting proteins) and recruiting the GPRCs to the adapter protein 2 complex 2 (AP-2) in clathrin-coated pits (CCPs). However, the extent of beta-arrestin involvement appears to vary significantly depending on the receptor, agonist and cell type. Internalized arrestin-receptor complexes traffic to intracellular endosomes, where they remain uncoupled from G-proteins. Two different modes of arrestin-mediated internalization occur. Class A receptors, like ADRB2, OPRM1, ENDRA, D1AR and ADRA1B dissociate from beta-arrestin at or near the plasma membrane and undergo rapid recycling. Class B receptors, like AVPR2, AGTR1, NTSR1, TRHR and TACR1 internalize as a complex with arrestin and traffic with it to endosomal vesicles, presumably as desensitized receptors, for extended periods of time. Receptor resensitization then requires that receptor-bound arrestin is removed so that the receptor can be dephosphorylated and returned to the plasma membrane. Involved in internalization of P2RY4 and UTP-stimulated internalization of P2RY2. Involved in phosphorylation-dependent internalization of OPRD1 ands subsequent recycling. Involved in the degradation of cAMP by recruiting cAMP phosphodiesterases to ligand-activated receptors. Beta-arrestins function as multivalent adapter proteins that can switch the GPCR from a G-protein signaling mode that transmits short-lived signals from the plasma membrane via small molecule second messengers and ion channels to a beta-arrestin signaling mode that transmits a distinct set of signals that are initiated as the receptor internalizes and transits the intracellular compartment. Acts as a signaling scaffold for MAPK pathways such as MAPK1/3 (ERK1/2). ERK1/2 activated by the beta-arrestin scaffold is largely excluded from the nucleus and confined to cytoplasmic locations such as endocytic vesicles, also called beta-arrestin signalosomes. Recruits c-Src/SRC to ADRB2 resulting in ERK activation. GPCRs for which the beta-arrestin-mediated signaling relies on both ARRB1 and ARRB2 (codependent regulation) include ADRB2, F2RL1 and PTH1R. For some GPCRs the beta-arrestin-mediated signaling relies on either ARRB1 or ARRB2 and is inhibited by the other respective beta-arrestin form (reciprocal regulation). Inhibits ERK1/2 signaling in AGTR1- and AVPR2-mediated activation (reciprocal regulation). Is required for SP-stimulated endocytosis of NK1R and recruits c-Src/SRC to internalized NK1R resulting in ERK1/2 activation, which is required for the antiapoptotic effects of SP. Is involved in proteinase-activated F2RL1-mediated ERK activity. Acts as a signaling scaffold for the AKT1 pathway. Is involved in alpha-thrombin-stimulated AKT1 signaling. Is involved in IGF1-stimulated AKT1 signaling leading to increased protection from apoptosis. Involved in activation of the p38 MAPK signaling pathway and in actin bundle formation. Involved in F2RL1-mediated cytoskeletal rearrangement and chemotaxis. Involved in AGTR1-mediated stress fiber formation by acting together with GNAQ to activate RHOA. Appears to function as signaling scaffold involved in regulation of MIP-1-beta-stimulated CCR5-dependent chemotaxis. Involved in attenuation of NF-kappa-B-dependent transcription in response to GPCR or cytokine stimulation by interacting with and stabilizing CHUK. May serve as nuclear messenger for GPCRs. Involved in OPRD1-stimulated transcriptional regulation by translocating to CDKN1B and FOS promoter regions and recruiting EP300 resulting in acetylation of histone H4. Involved in regulation of LEF1 transcriptional activity via interaction with DVL1 and/or DVL2 Also involved in regulation of receptors other than GPCRs. Involved in Toll-like receptor and IL-1 receptor signaling through the interaction with TRAF6 which prevents TRAF6 autoubiquitination and oligomerization required for activation of NF-kappa-B and JUN. Involved in IL8-mediated granule release in neutrophils. Binds phosphoinositides. Binds inositolhexakisphosphate (InsP6). Required for atypical chemokine receptor ACKR2-induced RAC1-LIMK1-PAK1-dependent phosphorylation of cofilin (CFL1) and for the up-regulation of ACKR2 from endosomal compartment to cell membrane, increasing its efficiency in chemokine uptake and degradation. Involved in the internalization of the atypical chemokine receptor ACKR3. Negatively regulates the NOTCH signaling pathway by mediating the ubiquitination and degradation of NOTCH1 by ITCH. Participates in the recruitment of the ubiquitin-protein ligase to the receptor. The sequence is that of Beta-arrestin-1 (ARRB1) from Macaca fascicularis (Crab-eating macaque).